A 128-amino-acid polypeptide reads, in one-letter code: Sulfurtransferase TusD (128 aa).

The active-site Cysteine persulfide intermediate is the Cys-78.

The protein belongs to the DsrE/TusD family. As to quaternary structure, heterohexamer, formed by a dimer of trimers. The hexameric TusBCD complex contains 2 copies each of TusB, TusC and TusD. The TusBCD complex interacts with TusE.

It localises to the cytoplasm. Functionally, part of a sulfur-relay system required for 2-thiolation of 5-methylaminomethyl-2-thiouridine (mnm(5)s(2)U) at tRNA wobble positions. Accepts sulfur from TusA and transfers it in turn to TusE. This Shigella dysenteriae serotype 1 (strain Sd197) protein is Sulfurtransferase TusD.